A 439-amino-acid chain; its full sequence is tRNA-2-methylthio-N(6)-dimethylallyladenosine synthase (439 aa).

An MTTase N-terminal domain is found at 5–121 (KKLFIKTYGC…LPELEAKTRA (117 aa)). The [4Fe-4S] cluster site is built by Cys-14, Cys-50, Cys-84, Cys-159, Cys-163, and Cys-166. The Radical SAM core domain maps to 145–378 (AKRGPTAFLT…ITRHQREIQD (234 aa)). Residues 378-439 (DGMVGREVSV…GANSLAGELA (62 aa)) form the TRAM domain.

The protein belongs to the methylthiotransferase family. MiaB subfamily. As to quaternary structure, monomer. It depends on [4Fe-4S] cluster as a cofactor.

It is found in the cytoplasm. It carries out the reaction N(6)-dimethylallyladenosine(37) in tRNA + (sulfur carrier)-SH + AH2 + 2 S-adenosyl-L-methionine = 2-methylsulfanyl-N(6)-dimethylallyladenosine(37) in tRNA + (sulfur carrier)-H + 5'-deoxyadenosine + L-methionine + A + S-adenosyl-L-homocysteine + 2 H(+). In terms of biological role, catalyzes the methylthiolation of N6-(dimethylallyl)adenosine (i(6)A), leading to the formation of 2-methylthio-N6-(dimethylallyl)adenosine (ms(2)i(6)A) at position 37 in tRNAs that read codons beginning with uridine. The chain is tRNA-2-methylthio-N(6)-dimethylallyladenosine synthase from Ruegeria pomeroyi (strain ATCC 700808 / DSM 15171 / DSS-3) (Silicibacter pomeroyi).